Here is a 136-residue protein sequence, read N- to C-terminus: Nodulation protein K (136 aa).

The sequence is that of Nodulation protein K (nodK) from Bradyrhizobium sp. (strain ANU 289).